A 361-amino-acid polypeptide reads, in one-letter code: Phosphoribosylformylglycinamidine cyclo-ligase (361 aa).

Belongs to the AIR synthase family.

Its subcellular location is the cytoplasm. The catalysed reaction is 2-formamido-N(1)-(5-O-phospho-beta-D-ribosyl)acetamidine + ATP = 5-amino-1-(5-phospho-beta-D-ribosyl)imidazole + ADP + phosphate + H(+). Its pathway is purine metabolism; IMP biosynthesis via de novo pathway; 5-amino-1-(5-phospho-D-ribosyl)imidazole from N(2)-formyl-N(1)-(5-phospho-D-ribosyl)glycinamide: step 2/2. The chain is Phosphoribosylformylglycinamidine cyclo-ligase from Bartonella quintana (strain Toulouse) (Rochalimaea quintana).